The chain runs to 140 residues: Secreted RxLR effector protein 37 (140 aa).

Residues 1–22 form the signal peptide; sequence MTYRLPFVAVILFVTAKHVVLA. The RxLR-dEER motif lies at 57–76; the sequence is RFLRQLEKKPGVNDKRDEER.

Belongs to the RxLR effector family.

The protein localises to the secreted. It localises to the host nucleus. The protein resides in the host cytoplasm. Secreted effector that completely suppresses the host cell death induced by cell death-inducing proteins. In Plasmopara viticola (Downy mildew of grapevine), this protein is Secreted RxLR effector protein 37.